A 190-amino-acid polypeptide reads, in one-letter code: Adenylate kinase (190 aa).

ATP is bound at residue 11–16 (GAGKGT). The interval 31–60 (STGDIFRFNIKNETELGKLAKTFMDKGDLV) is NMP. Residues T32, R37, 58 to 60 (DLV), 86 to 89 (GFPR), and Q93 each bind AMP. Positions 127–137 (ERGKTSGRVDD) are LID. R128 lines the ATP pocket. R134 and R146 together coordinate AMP. G174 is a binding site for ATP.

The protein belongs to the adenylate kinase family. Monomer.

The protein localises to the cytoplasm. The catalysed reaction is AMP + ATP = 2 ADP. Its pathway is purine metabolism; AMP biosynthesis via salvage pathway; AMP from ADP: step 1/1. Catalyzes the reversible transfer of the terminal phosphate group between ATP and AMP. Plays an important role in cellular energy homeostasis and in adenine nucleotide metabolism. This chain is Adenylate kinase, found in Flavobacterium psychrophilum (strain ATCC 49511 / DSM 21280 / CIP 103535 / JIP02/86).